Consider the following 299-residue polypeptide: Farnesyl diphosphate synthase (299 aa).

Positions 45, 48, and 77 each coordinate isopentenyl diphosphate. Residues aspartate 84 and aspartate 90 each contribute to the Mg(2+) site. Residue arginine 95 coordinates (2E)-geranyl diphosphate. An isopentenyl diphosphate-binding site is contributed by arginine 96. Positions 181, 182, 220, and 237 each coordinate (2E)-geranyl diphosphate.

Belongs to the FPP/GGPP synthase family. Requires Mg(2+) as cofactor.

Its subcellular location is the cytoplasm. It carries out the reaction isopentenyl diphosphate + (2E)-geranyl diphosphate = (2E,6E)-farnesyl diphosphate + diphosphate. The sequence is that of Farnesyl diphosphate synthase (ispA) from Escherichia coli (strain K12).